The sequence spans 793 residues: Phenylalanine--tRNA ligase beta subunit (793 aa).

In terms of domain architecture, tRNA-binding spans 39-148 (AGQFTHVIVA…DEAPIGMDLR (110 aa)). Residues 401-477 (PGTVSFLFDT…RLYGYDKLQA (77 aa)) enclose the B5 domain. 4 residues coordinate Mg(2+): D455, D461, E464, and E465. Residues 698–792 (SKYPQIRRDL…LENEFSILLR (95 aa)) enclose the FDX-ACB domain.

It belongs to the phenylalanyl-tRNA synthetase beta subunit family. Type 1 subfamily. Tetramer of two alpha and two beta subunits. Requires Mg(2+) as cofactor.

Its subcellular location is the cytoplasm. It catalyses the reaction tRNA(Phe) + L-phenylalanine + ATP = L-phenylalanyl-tRNA(Phe) + AMP + diphosphate + H(+). The protein is Phenylalanine--tRNA ligase beta subunit of Legionella pneumophila (strain Lens).